The primary structure comprises 344 residues: Methionine import ATP-binding protein MetN (344 aa).

The ABC transporter domain occupies 7–245 (ISLKKISRCF…PQDDTTIAML (239 aa)). Position 42-49 (42-49 (GRSGAGKS)) interacts with ATP.

This sequence belongs to the ABC transporter superfamily. Methionine importer (TC 3.A.1.24) family. The complex is composed of two ATP-binding proteins (MetN), two transmembrane proteins (MetI) and a solute-binding protein (MetQ).

It localises to the cell inner membrane. The catalysed reaction is L-methionine(out) + ATP + H2O = L-methionine(in) + ADP + phosphate + H(+). It catalyses the reaction D-methionine(out) + ATP + H2O = D-methionine(in) + ADP + phosphate + H(+). Functionally, part of the ABC transporter complex MetNIQ involved in methionine import. Responsible for energy coupling to the transport system. The chain is Methionine import ATP-binding protein MetN from Bartonella henselae (strain ATCC 49882 / DSM 28221 / CCUG 30454 / Houston 1) (Rochalimaea henselae).